We begin with the raw amino-acid sequence, 310 residues long: uncharacterized protein (310 aa).

The HTH lysR-type domain occupies 5–62; sequence FTEENLLAFTTAARFGSFSKAAEELGLTTSAISYTIKRMETGLDVVLFTRSTRSIELT. Residues 22–42 constitute a DNA-binding region (H-T-H motif); it reads FSKAAEELGLTTSAISYTIKR.

Belongs to the LysR transcriptional regulatory family.

This is an uncharacterized protein from Escherichia coli (strain K12).